The following is a 365-amino-acid chain: MKALILVGGYGTRLRPLTLTQPKPLVEFANKPMMLHQMEALAEVGVDTVVLAVSYRAEQLEQEMTVHADRLGVKLIFSLEEEPLGTAGPLALARKHLEGDAPFFVLNSDVICDFPFKQMVEFHKNHGKEGTIAVTKVEEPSKYGVVVFDQDKGKIDDFVEKPQEYVGNKINAGLYIFSSKILDRIPLKPTSIEKEIFPEMAFSGNLYAFVLPGFWMDVGQPKDFLKGMSLFLNHCHTTKSDKLETGSNIHPTATIRGNVMVDPSATVGENCVIGPDVVIGPRVKIEGGVRILHSTILSDSSIGNYSWVSGSIVGRKCHIGSWVRIENICVIGDDVVVKDELYLNGASVLPHKSIAVNVPSKDIIM.

The substrate-binding domain stretch occupies residues 2–221; that stretch reads KALILVGGYG…PGFWMDVGQP (220 aa). GDP-alpha-D-mannose is bound at residue Asp109. Position 109 (Asp109) interacts with Mg(2+). The active site involves Lys161. Position 217 (Asp217) interacts with GDP-alpha-D-mannose. Asp217 lines the Mg(2+) pocket. Residues 244-365 form a hexapeptide repeat domain region; sequence ETGSNIHPTA…VNVPSKDIIM (122 aa).

The protein belongs to the transferase hexapeptide repeat family. In terms of assembly, component of the GMPPA-GMPPB mannose-1-phosphate guanylyltransferase complex composed of 4 GMPPA subunits and 8 tag-335/GMPPB subunits; the complex is organized into three layers, a central layer made up of 2 GMPPA dimers sandwiched between two layers each made up of 2 tag-335/GMPPB dimers. Catalytic activity of tag-335/GMPPB is reduced when part of the complex and binding of GDP-alpha-D-Mannose by GMPPA induces allosteric feedback inhibition of tag-335/GMPPB. Requires Mg(2+) as cofactor.

The enzyme catalyses alpha-D-mannose 1-phosphate + GTP + H(+) = GDP-alpha-D-mannose + diphosphate. It participates in nucleotide-sugar biosynthesis; GDP-alpha-D-mannose biosynthesis; GDP-alpha-D-mannose from alpha-D-mannose 1-phosphate (GTP route): step 1/1. With respect to regulation, enzyme activity is reduced by incorporation into the GMPPA-GMPPB mannose-1-phosphate guanylyltransferase complex. Allosterically inhibited, when part of the GMPPA-GMPPB complex, by GDP-alpha-D-mannose binding to GMPPA. Catalytic subunit of the GMPPA-GMPPB mannose-1-phosphate guanylyltransferase complex. Catalyzes the formation of GDP-mannose, an essential precursor of glycan moieties of glycoproteins and glycolipids. Can catalyze the reverse reaction in vitro. Together with GMPPA regulates GDP-alpha-D-mannose levels. The sequence is that of Mannose-1-phosphate guanylyltransferase catalytic subunit beta (tag-335) from Caenorhabditis elegans.